A 1755-amino-acid polypeptide reads, in one-letter code: Transposon Ty1-PR1 Gag-Pol polyprotein (1755 aa).

4 stretches are compositionally biased toward polar residues: residues 1–23 (MESQ…SVTS), 48–60 (TKAN…TPAS), 71–93 (SPQT…MMTQ), and 127–152 (QSQF…GNTF). Disordered regions lie at residues 1 to 93 (MESQ…MMTQ), 126 to 173 (PQSQ…RPPP), and 352 to 421 (GSRN…SKST). Positions 153-165 (TDSSSADSDMTST) are enriched in low complexity. The interval 299–401 (NNGIHINNKV…NSKSKTARAH (103 aa)) is RNA-binding. Residues 402-418 (NVSTSNNSPSTDNDSIS) are compositionally biased toward low complexity. Ser416 carries the post-translational modification Phosphoserine. Asp461 functions as the For protease activity; shared with dimeric partner in the catalytic mechanism. The tract at residues 583–640 (NVHTSESTRKYPYPFIHRMLAHANAQTIRYSLKNNTITYFNESDVDWSSAIDYQCPDC) is integrase-type zinc finger-like. The region spanning 660–835 (NSYEPFQYLH…AGLDISTLLP (176 aa)) is the Integrase catalytic domain. Asp671 and Asp736 together coordinate Mg(2+). 3 disordered regions span residues 956 to 1087 (SKAV…ETEK), 1092 to 1111 (RSPS…NIVP), and 1130 to 1187 (DLPL…DNET). A compositionally biased stretch (low complexity) spans 960–969 (SPTDSTPPST). Polar residues predominate over residues 1005 to 1015 (STPQISNIEST). Basic and acidic residues predominate over residues 1038 to 1053 (ESSHASKSKDFRHSDS). Polar residues-rich tracts occupy residues 1054–1082 (YSEN…QISD) and 1101–1111 (PENNSSHNIVP). Positions 1178–1212 (KKRSLEDNETEIKVSRDTWNTKNMRSLEPPRSKKR) match the Bipartite nuclear localization signal motif. The 139-residue stretch at 1338–1476 (NNYYITQLDI…DILGLEIKYQ (139 aa)) folds into the Reverse transcriptase Ty1/copia-type domain. The Mg(2+) site is built by Asp1346, Asp1427, Asp1428, Asp1610, Glu1652, and Asp1685. The region spanning 1610–1752 (DASYGNQPYY…IKTFKLLTNK (143 aa)) is the RNase H Ty1/copia-type domain.

As to quaternary structure, the capsid protein forms a homotrimer, from which the VLPs are assembled. The protease is a homodimer, whose active site consists of two apposed aspartic acid residues. In terms of processing, initially, virus-like particles (VLPs) are composed of the structural unprocessed proteins Gag and Gag-Pol, and also contain the host initiator methionine tRNA (tRNA(i)-Met) which serves as a primer for minus-strand DNA synthesis, and a dimer of genomic Ty RNA. Processing of the polyproteins occurs within the particle and proceeds by an ordered pathway, called maturation. First, the protease (PR) is released by autocatalytic cleavage of the Gag-Pol polyprotein yielding capsid protein p45 and a Pol-p154 precursor protein. This cleavage is a prerequisite for subsequent processing of Pol-p154 at the remaining sites to release the mature structural and catalytic proteins. Maturation takes place prior to the RT reaction and is required to produce transposition-competent VLPs.

Its subcellular location is the cytoplasm. It localises to the nucleus. The catalysed reaction is DNA(n) + a 2'-deoxyribonucleoside 5'-triphosphate = DNA(n+1) + diphosphate. It catalyses the reaction Endonucleolytic cleavage to 5'-phosphomonoester.. Functionally, capsid protein (CA) is the structural component of the virus-like particle (VLP), forming the shell that encapsulates the retrotransposons dimeric RNA genome. The particles are assembled from trimer-clustered units and there are holes in the capsid shells that allow for the diffusion of macromolecules. CA also has nucleocapsid-like chaperone activity, promoting primer tRNA(i)-Met annealing to the multipartite primer-binding site (PBS), dimerization of Ty1 RNA and initiation of reverse transcription. The aspartyl protease (PR) mediates the proteolytic cleavages of the Gag and Gag-Pol polyproteins after assembly of the VLP. In terms of biological role, reverse transcriptase/ribonuclease H (RT) is a multifunctional enzyme that catalyzes the conversion of the retro-elements RNA genome into dsDNA within the VLP. The enzyme displays a DNA polymerase activity that can copy either DNA or RNA templates, and a ribonuclease H (RNase H) activity that cleaves the RNA strand of RNA-DNA heteroduplexes during plus-strand synthesis and hydrolyzes RNA primers. The conversion leads to a linear dsDNA copy of the retrotransposon that includes long terminal repeats (LTRs) at both ends. Its function is as follows. Integrase (IN) targets the VLP to the nucleus, where a subparticle preintegration complex (PIC) containing at least integrase and the newly synthesized dsDNA copy of the retrotransposon must transit the nuclear membrane. Once in the nucleus, integrase performs the integration of the dsDNA into the host genome. This is Transposon Ty1-PR1 Gag-Pol polyprotein (TY1B-PR1) from Saccharomyces cerevisiae (strain ATCC 204508 / S288c) (Baker's yeast).